The primary structure comprises 130 residues: Small ribosomal subunit protein uS9 (130 aa).

It belongs to the universal ribosomal protein uS9 family.

The chain is Small ribosomal subunit protein uS9 from Bacillus thuringiensis subsp. konkukian (strain 97-27).